Here is a 243-residue protein sequence, read N- to C-terminus: uncharacterized protein (243 aa).

The protein belongs to the methyltransferase superfamily.

This is an uncharacterized protein from Mycobacterium tuberculosis (strain CDC 1551 / Oshkosh).